The sequence spans 429 residues: Trigger factor (429 aa).

Positions 161–246 (GDRLSIDFKG…INEIASPKEL (86 aa)) constitute a PPIase FKBP-type domain.

It belongs to the FKBP-type PPIase family. Tig subfamily.

The protein resides in the cytoplasm. The catalysed reaction is [protein]-peptidylproline (omega=180) = [protein]-peptidylproline (omega=0). In terms of biological role, involved in protein export. Acts as a chaperone by maintaining the newly synthesized protein in an open conformation. Functions as a peptidyl-prolyl cis-trans isomerase. The sequence is that of Trigger factor from Vesicomyosocius okutanii subsp. Calyptogena okutanii (strain HA).